A 583-amino-acid chain; its full sequence is 2-succinyl-5-enolpyruvyl-6-hydroxy-3-cyclohexene-1-carboxylate synthase (583 aa).

The protein belongs to the TPP enzyme family. MenD subfamily. As to quaternary structure, homodimer. Requires Mg(2+) as cofactor. The cofactor is Mn(2+). Thiamine diphosphate serves as cofactor.

The catalysed reaction is isochorismate + 2-oxoglutarate + H(+) = 5-enolpyruvoyl-6-hydroxy-2-succinyl-cyclohex-3-ene-1-carboxylate + CO2. It functions in the pathway quinol/quinone metabolism; 1,4-dihydroxy-2-naphthoate biosynthesis; 1,4-dihydroxy-2-naphthoate from chorismate: step 2/7. It participates in quinol/quinone metabolism; menaquinone biosynthesis. In terms of biological role, catalyzes the thiamine diphosphate-dependent decarboxylation of 2-oxoglutarate and the subsequent addition of the resulting succinic semialdehyde-thiamine pyrophosphate anion to isochorismate to yield 2-succinyl-5-enolpyruvyl-6-hydroxy-3-cyclohexene-1-carboxylate (SEPHCHC). The chain is 2-succinyl-5-enolpyruvyl-6-hydroxy-3-cyclohexene-1-carboxylate synthase from Chlorobaculum parvum (strain DSM 263 / NCIMB 8327) (Chlorobium vibrioforme subsp. thiosulfatophilum).